A 102-amino-acid polypeptide reads, in one-letter code: Monothiol glutaredoxin-S6 (102 aa).

The region spanning 1–101 (MESVRSLVED…AMLRRAGAIW (101 aa)) is the Glutaredoxin domain. Residue cysteine 21 participates in [2Fe-2S] cluster binding.

Belongs to the glutaredoxin family. CC-type subfamily.

It localises to the cytoplasm. May only reduce GSH-thiol disulfides, but not protein disulfides. This is Monothiol glutaredoxin-S6 (GRXS6) from Arabidopsis thaliana (Mouse-ear cress).